A 392-amino-acid polypeptide reads, in one-letter code: Retrovirus-related Pol polyprotein from type-1 retrotransposable element R1 4 (392 aa).

The Reverse transcriptase domain maps to 1-230; sequence PFADDLAVLV…GGVVIRRRPE (230 aa). The interval 231 to 392 is nucleic acid-binding endonuclease; sequence GLKENYNRVL…DEGLSSESEE (162 aa).

It catalyses the reaction DNA(n) + a 2'-deoxyribonucleoside 5'-triphosphate = DNA(n+1) + diphosphate. This is Retrovirus-related Pol polyprotein from type-1 retrotransposable element R1 4 from Nasonia vitripennis (Parasitic wasp).